Here is a 668-residue protein sequence, read N- to C-terminus: Probable tRNA (uracil-O(2)-)-methyltransferase (668 aa).

Positions 441-460 (QHTDSLHISTKSSLDKDDPP) are disordered. A C3H1-type zinc finger spans residues 620-649 (LKTRLCWFYVHHPNGCPRVAKSCPYAHGAE).

The protein belongs to the TRM44 family.

Its subcellular location is the cytoplasm. It carries out the reaction uridine(44) in tRNA(Ser) + S-adenosyl-L-methionine = 2'-O-methyluridine(44) in tRNA(Ser) + S-adenosyl-L-homocysteine + H(+). In terms of biological role, probable adenosyl-L-methionine (AdoMet)-dependent tRNA (uracil-O(2)-)-methyltransferase. The polypeptide is Probable tRNA (uracil-O(2)-)-methyltransferase (trmt44) (Xenopus laevis (African clawed frog)).